Consider the following 172-residue polypeptide: Small ribosomal subunit protein uS5 (172 aa).

In terms of domain architecture, S5 DRBM spans 17-80; that stretch reads LREKMISVNR…EQARRNMFKV (64 aa).

The protein belongs to the universal ribosomal protein uS5 family. In terms of assembly, part of the 30S ribosomal subunit. Contacts proteins S4 and S8.

In terms of biological role, with S4 and S12 plays an important role in translational accuracy. Functionally, located at the back of the 30S subunit body where it stabilizes the conformation of the head with respect to the body. In Paraburkholderia phymatum (strain DSM 17167 / CIP 108236 / LMG 21445 / STM815) (Burkholderia phymatum), this protein is Small ribosomal subunit protein uS5.